The primary structure comprises 410 residues: Protein ea47 (410 aa).

This chain is Protein ea47 (ea47), found in Escherichia coli (Bacteriophage lambda).